A 157-amino-acid polypeptide reads, in one-letter code: uncharacterized protein (157 aa).

This is an uncharacterized protein from Magallana gigas (Pacific oyster).